We begin with the raw amino-acid sequence, 396 residues long: MAFAPMGPEASFFDALDRHRASLLAMVKRGAGETPAGATRVASSSEVLTAIENIIQDIIKSLARNEVPAFTIDNRSSWENIMFDDSVGLRMIPQCTTRKIRSDSPKSVKKFALILKVLSMIYKLIQSDTYATKRDIYYTDSQLFGNQAAVDSAIDDISCMLKVPRRSLHVLSTSKGLIAGNLRYMEEDGTRVQCTCSATATAVPTNIQGMQHLITDAKFLLIVEKDATFQRLLDDNFCSRMSPCIMVTGKGVPDLNTRLLVKKLWDTFHIPVFTLVDADPYGIEIMCIYKYGSMSMSFEAHNLTIPTIRWLGLLPSDIQRLNIPKDSLIPLTKHDQMKLDSILKRPYITYQPLWKKELEMMADSKMKAEIQALTLLSSDYLSRVYLPNKLRFGGWI.

One can recognise a Topo IIA-type catalytic domain in the interval 42-177; that stretch reads ASSSEVLTAI…LHVLSTSKGL (136 aa). Residue Y138 is the O-(5'-phospho-DNA)-tyrosine intermediate of the active site. Mg(2+)-binding residues include E224 and D277.

The protein belongs to the TOP6A family. Heterotetramer of SPO11 and 2 TOP6BL chains. Interacts with TOP6BL. As to quaternary structure, does not interact with TOP6BL. Mg(2+) serves as cofactor. As to expression, high levels are found only in the testis where expression is restricted primarily to meiotic germ cells. Not expressed in spermatogonia. Highest levels are found in pachytene spermatocytes. Very low levels are found in thymus, brain and oocytes of embryonic ovary. Not detected in adult ovary. Isoform 1: Expressed early in meiosis, when most double-strand breaks (DSB) are formed.

It localises to the nucleus. The catalysed reaction is ATP-dependent breakage, passage and rejoining of double-stranded DNA.. Component of a topoisomerase 6 complex specifically required for meiotic recombination. Together with TOP6BL, mediates DNA cleavage that forms the double-strand breaks (DSB) that initiate meiotic recombination. The complex promotes relaxation of negative and positive supercoiled DNA and DNA decatenation through cleavage and ligation cycles. Essential for the phosphorylation of SMC3, HORMAD1 and HORMAD2. Functionally, in contrast to isoform 1, does not mediate DNA cleavage that forms the double-strand breaks (DSB) that initiate meiotic recombination. In Mus musculus (Mouse), this protein is Meiotic recombination protein SPO11 (Spo11).